Reading from the N-terminus, the 106-residue chain is SH3 domain-binding glutamic acid-rich-like protein 2-A (106 aa).

Positions 61-67 (QGNPLPP) match the SH3-binding motif.

This sequence belongs to the SH3BGR family.

The protein localises to the nucleus. This chain is SH3 domain-binding glutamic acid-rich-like protein 2-A (sh3bgrl2-a), found in Xenopus laevis (African clawed frog).